We begin with the raw amino-acid sequence, 265 residues long: Secreted RxLR effector protein 16 (265 aa).

The N-terminal stretch at 1-19 (MRGAFYIAIALLIVRSRTA) is a signal peptide. The RxLR-dEER motif lies at 46 to 61 (RYLRGGLALSATNEER). N-linked (GlcNAc...) asparagine glycans are attached at residues Asn-170, Asn-219, and Asn-240.

This sequence belongs to the RxLR effector family. Post-translationally, N-glycosylated. The putative N-glycosylation site at position 240 is essential for cell death-inducing activity.

Its subcellular location is the secreted. It localises to the host nucleus. In terms of biological role, effector that acts as an elicitor that induces cell death and promotes ROS accumulation in Nicotian benthamiana. RxLR16-triggered cell death is dependent on SGT1, HSP90 and RAR1, but independent of the somatic embryogenesis receptor-like kinase SERK3/BAK1, indicating that it acts independently of the detection of cell surface pattern recognition receptors. Enhances the expressional levels of defense-associated genes involved in the salicylic acid-, jasmonate acid-, and ethylene-mediated signal transduction, resulting in disease resistance. However, as some other Plasmopara viticola RxLR effectors including RxLR1, RxLR10, RxLR30 and RxLR25, can suppress defense responses and disease resistance induced by RxLR16, it may not trigger host cell death or immune responses during physiological infection under natural conditions. This Plasmopara viticola (Downy mildew of grapevine) protein is Secreted RxLR effector protein 16.